The primary structure comprises 108 residues: Peptidyl-prolyl cis-trans isomerase FKBP1A (108 aa).

In terms of domain architecture, PPIase FKBP-type spans 20–108 (GQTCVVHYTG…IFDVELLKLE (89 aa)). Position 53 is an N6-acetyllysine; alternate (Lys-53). Lys-53 carries the post-translational modification N6-succinyllysine; alternate.

Belongs to the FKBP-type PPIase family. FKBP1 subfamily. In terms of assembly, interacts with TGFBR1; prevents TGFBR1 phosphorylation by TGFBR2 and stabilizes it in the inactive conformation. Interacts with ACVR1B and SMAD7. Identified in a complex composed of RYR1, PDE4D, PKA, FKBP1A and protein phosphatase 1 (PP1). Interacts directly with RYR2 and RYR3. Interacts with GLMN; rapamycin and FK506 abolish the interaction with GLMN in a dose dependent manner. Interacts directly with RYR1.

The protein resides in the cytoplasm. The protein localises to the cytosol. It localises to the sarcoplasmic reticulum membrane. The enzyme catalyses [protein]-peptidylproline (omega=180) = [protein]-peptidylproline (omega=0). Inhibited by both FK506 and rapamycin. Keeps in an inactive conformation TGFBR1, the TGF-beta type I serine/threonine kinase receptor, preventing TGF-beta receptor activation in absence of ligand. May modulate the RYR1 calcium channel activity. PPIases accelerate the folding of proteins. It catalyzes the cis-trans isomerization of proline imidic peptide bonds in oligopeptides. The polypeptide is Peptidyl-prolyl cis-trans isomerase FKBP1A (FKBP1A) (Bos taurus (Bovine)).